The primary structure comprises 840 residues: Probable alpha-glucuronidase A (840 aa).

The N-terminal stretch at Met-1–Ala-19 is a signal peptide. N-linked (GlcNAc...) asparagine glycosylation is found at Asn-50, Asn-149, Asn-222, Asn-262, Asn-279, Asn-310, Asn-465, Asn-527, Asn-576, Asn-610, Asn-682, Asn-723, and Asn-732.

It belongs to the glycosyl hydrolase 67 family.

It localises to the secreted. It carries out the reaction an alpha-D-glucuronoside + H2O = D-glucuronate + an alcohol. Alpha-glucuronidase involved in the hydrolysis of xylan, a major structural heterogeneous polysaccharide found in plant biomass representing the second most abundant polysaccharide in the biosphere, after cellulose. Releases 4-O-methylglucuronic acid from xylan. The sequence is that of Probable alpha-glucuronidase A (aguA) from Neosartorya fischeri (strain ATCC 1020 / DSM 3700 / CBS 544.65 / FGSC A1164 / JCM 1740 / NRRL 181 / WB 181) (Aspergillus fischerianus).